Reading from the N-terminus, the 106-residue chain is uncharacterized protein (106 aa).

It belongs to the csb family.

This is an uncharacterized protein from Dictyostelium discoideum (Social amoeba).